Reading from the N-terminus, the 215-residue chain is Pyridoxine/pyridoxamine 5'-phosphate oxidase (215 aa).

Substrate contacts are provided by residues 9 to 12 (RRDY) and Lys-69. Residues 64–69 (RVLLLK), 79–80 (FS), Lys-86, and Gln-108 each bind FMN. Tyr-126, Arg-130, and Ser-134 together coordinate substrate. FMN contacts are provided by residues 143–144 (QS) and Trp-188. 194–196 (RLH) provides a ligand contact to substrate. Residue Arg-198 participates in FMN binding.

This sequence belongs to the pyridoxamine 5'-phosphate oxidase family. In terms of assembly, homodimer. Requires FMN as cofactor.

It catalyses the reaction pyridoxamine 5'-phosphate + O2 + H2O = pyridoxal 5'-phosphate + H2O2 + NH4(+). It carries out the reaction pyridoxine 5'-phosphate + O2 = pyridoxal 5'-phosphate + H2O2. Its pathway is cofactor metabolism; pyridoxal 5'-phosphate salvage; pyridoxal 5'-phosphate from pyridoxamine 5'-phosphate: step 1/1. It participates in cofactor metabolism; pyridoxal 5'-phosphate salvage; pyridoxal 5'-phosphate from pyridoxine 5'-phosphate: step 1/1. Its function is as follows. Catalyzes the oxidation of either pyridoxine 5'-phosphate (PNP) or pyridoxamine 5'-phosphate (PMP) into pyridoxal 5'-phosphate (PLP). This is Pyridoxine/pyridoxamine 5'-phosphate oxidase from Azotobacter vinelandii (strain DJ / ATCC BAA-1303).